The chain runs to 437 residues: Vasoactive intestinal polypeptide receptor 2 (437 aa).

An N-terminal signal peptide occupies residues 1–22 (MRASVVLTCYCWLLVRVSSIHP). Residues 23 to 123 (ECRFHLEIQE…EDESKITFYI (101 aa)) are Extracellular-facing. 3 disulfides stabilise this stretch: Cys-37–Cys-60, Cys-51–Cys-92, and Cys-74–Cys-108. Residues Asn-57, Asn-87, and Asn-91 are each glycosylated (N-linked (GlcNAc...) asparagine). A helical membrane pass occupies residues 124–149 (LVKAIYTLGYSVSLMSLTTGSIIICL). The Cytoplasmic portion of the chain corresponds to 150–157 (FRKLHCTR). A helical membrane pass occupies residues 158 to 179 (NYIHLNLFLSFMLRAISVLVKD). Over 180-202 (SVLYSSSGTLRCHDQPGSWVGCK) the chain is Extracellular. Cys-201 and Cys-270 form a disulfide bridge. A helical transmembrane segment spans residues 203–227 (LSLVFFQYCIMANFYWLLVEGLYLH). The Cytoplasmic portion of the chain corresponds to 228–238 (TLLVAILPPSR). The chain crosses the membrane as a helical span at residues 239–260 (CFLAYLLIGWGIPSVCIGAWIA). At 261-279 (TRLSLEDTGCWDTNDHSIP) the chain is on the extracellular side. A helical transmembrane segment spans residues 280 to 303 (WWVIRMPILISIVVNFALFISIVR). Residues 304-324 (ILLQKLTSPDVGGNDQSQYKR) are Cytoplasmic-facing. A helical transmembrane segment spans residues 325–345 (LAKSTLLLIPLFGVHYMVFAA). Topologically, residues 346–353 (FPIGISST) are extracellular. Residues 354–377 (YQILFELCVGSFQGLVVAVLYCFL) form a helical membrane-spanning segment. Residues 378-437 (NSEVQCELKRRWRGLCLTQPGSRDYRLHSWSMSRNGSESALQIHRGSRTQSFLQSETSVI) are Cytoplasmic-facing.

Belongs to the G-protein coupled receptor 2 family. Interacts with ADCYAP1/PACAP (via N-terminal extracellular domain); activated by PACAP27 and CAPAC38 neuropeptides. Interacts with VIP; the interaction results in VIPR1 activation. Mainly in the thalamus, hippocampus and in the suprachiasmatic nucleus.

Its subcellular location is the cell membrane. Functionally, g protein-coupled receptor activated by the neuropeptides vasoactive intestinal peptide (VIP) and pituitary adenylate cyclase-activating polypeptide (ADCYAP1/PACAP). Binds VIP and both PACAP27 and PACAP38 bioactive peptides with the order of ligand affinity of VIP = PACAP38 &gt; PACAP27. Ligand binding causes a conformation change that triggers signaling via guanine nucleotide-binding proteins (G proteins) and modulates the activity of downstream effectors. Activates cAMP-dependent pathway. May be coupled to phospholipase C. The polypeptide is Vasoactive intestinal polypeptide receptor 2 (Rattus norvegicus (Rat)).